Consider the following 231-residue polypeptide: Uracil-DNA glycosylase (231 aa).

The active-site Proton acceptor is Asp70.

It belongs to the uracil-DNA glycosylase (UDG) superfamily. UNG family.

The protein resides in the cytoplasm. It catalyses the reaction Hydrolyzes single-stranded DNA or mismatched double-stranded DNA and polynucleotides, releasing free uracil.. Functionally, excises uracil residues from the DNA which can arise as a result of misincorporation of dUMP residues by DNA polymerase or due to deamination of cytosine. The sequence is that of Uracil-DNA glycosylase from Pseudomonas fluorescens (strain Pf0-1).